The following is a 150-amino-acid chain: UPF0260 protein PP_4587 (150 aa).

The protein belongs to the UPF0260 family.

This is UPF0260 protein PP_4587 from Pseudomonas putida (strain ATCC 47054 / DSM 6125 / CFBP 8728 / NCIMB 11950 / KT2440).